Here is a 204-residue protein sequence, read N- to C-terminus: MEIFSYIIIAVVAYLLGNISTSYIVAKRIAGVDIRTQGSGNAGSTNVLRTLGKRAGAMTFLGDVLKGVMAVLISEFAARLVGIDTLLAGYLAVICVVAGHNWPAVLGFRGGKGVATSLGAMLAVNPVITLMCLAVFILVVAITKYVSLGSVVGIGCSPIFMIMVKNKAGLIVALFLTASVIYNHRANIKRLLNGTERKIGQKKE.

A run of 5 helical transmembrane segments spans residues 6–26 (YIIIAVVAYLLGNISTSYIVA), 80–100 (LVGIDTLLAGYLAVICVVAGH), 122–142 (LAVNPVITLMCLAVFILVVAI), 144–164 (KYVSLGSVVGIGCSPIFMIMV), and 168–188 (AGLIVALFLTASVIYNHRANI).

It belongs to the PlsY family. Probably interacts with PlsX.

Its subcellular location is the cell membrane. The catalysed reaction is an acyl phosphate + sn-glycerol 3-phosphate = a 1-acyl-sn-glycero-3-phosphate + phosphate. It participates in lipid metabolism; phospholipid metabolism. Catalyzes the transfer of an acyl group from acyl-phosphate (acyl-PO(4)) to glycerol-3-phosphate (G3P) to form lysophosphatidic acid (LPA). This enzyme utilizes acyl-phosphate as fatty acyl donor, but not acyl-CoA or acyl-ACP. This Clostridioides difficile (strain 630) (Peptoclostridium difficile) protein is Glycerol-3-phosphate acyltransferase.